Here is a 717-residue protein sequence, read N- to C-terminus: Polyribonucleotide nucleotidyltransferase (717 aa).

2 residues coordinate Mg(2+): Asp-495 and Asp-501. Residues Pro-562 to Ile-624 form the KH domain. Positions Gly-634–Lys-703 constitute an S1 motif domain.

It belongs to the polyribonucleotide nucleotidyltransferase family. The cofactor is Mg(2+).

Its subcellular location is the cytoplasm. The enzyme catalyses RNA(n+1) + phosphate = RNA(n) + a ribonucleoside 5'-diphosphate. Functionally, involved in mRNA degradation. Catalyzes the phosphorolysis of single-stranded polyribonucleotides processively in the 3'- to 5'-direction. The protein is Polyribonucleotide nucleotidyltransferase of Cytophaga hutchinsonii (strain ATCC 33406 / DSM 1761 / CIP 103989 / NBRC 15051 / NCIMB 9469 / D465).